We begin with the raw amino-acid sequence, 184 residues long: Large ribosomal subunit protein uL6 (184 aa).

This sequence belongs to the universal ribosomal protein uL6 family. In terms of assembly, part of the 50S ribosomal subunit.

In terms of biological role, this protein binds to the 23S rRNA, and is important in its secondary structure. It is located near the subunit interface in the base of the L7/L12 stalk, and near the tRNA binding site of the peptidyltransferase center. The protein is Large ribosomal subunit protein uL6 of Thermotoga neapolitana (strain ATCC 49049 / DSM 4359 / NBRC 107923 / NS-E).